We begin with the raw amino-acid sequence, 316 residues long: Transaldolase 2 (316 aa).

Lysine 131 acts as the Schiff-base intermediate with substrate in catalysis.

Belongs to the transaldolase family. Type 1 subfamily. In terms of assembly, homodimer.

It localises to the cytoplasm. The catalysed reaction is D-sedoheptulose 7-phosphate + D-glyceraldehyde 3-phosphate = D-erythrose 4-phosphate + beta-D-fructose 6-phosphate. It participates in carbohydrate degradation; pentose phosphate pathway; D-glyceraldehyde 3-phosphate and beta-D-fructose 6-phosphate from D-ribose 5-phosphate and D-xylulose 5-phosphate (non-oxidative stage): step 2/3. Transaldolase is important for the balance of metabolites in the pentose-phosphate pathway. This chain is Transaldolase 2, found in Salmonella choleraesuis (strain SC-B67).